The primary structure comprises 129 residues: Follitropin subunit beta (129 aa).

Residues 1 to 20 (MKTVQFCFLFCCWKAICCNS) form the signal peptide. Intrachain disulfides connect Cys-21–Cys-69, Cys-35–Cys-84, Cys-38–Cys-122, Cys-46–Cys-100, Cys-50–Cys-102, and Cys-105–Cys-112. 2 N-linked (GlcNAc...) asparagine glycosylation sites follow: Asn-25 and Asn-42.

It belongs to the glycoprotein hormones subunit beta family. Heterodimer. The active follitropin is a heterodimer composed of an alpha chain/CGA shared with other hormones and a unique beta chain/FSHB shown here.

It localises to the secreted. Functionally, together with the alpha chain CGA constitutes follitropin, the follicle-stimulating hormone, and provides its biological specificity to the hormone heterodimer. Binds FSHR, a G protein-coupled receptor, on target cells to activate downstream signaling pathways. Follitropin is involved in follicle development and spermatogenesis in reproductive organs. This chain is Follitropin subunit beta (FSHB), found in Aotus nancymaae (Ma's night monkey).